The chain runs to 87 residues: uncharacterized protein (87 aa).

This is an uncharacterized protein from Dictyostelium discoideum (Social amoeba).